The chain runs to 198 residues: Recombination protein RecR (198 aa).

The C4-type zinc-finger motif lies at 57–72 (CSICGNLTDDDPCHIC). The 96-residue stretch at 80-175 (EIILVVEDSK…KVTRLARGLA (96 aa)) folds into the Toprim domain.

This sequence belongs to the RecR family.

Its function is as follows. May play a role in DNA repair. It seems to be involved in an RecBC-independent recombinational process of DNA repair. It may act with RecF and RecO. This Streptococcus equi subsp. equi (strain 4047) protein is Recombination protein RecR.